A 189-amino-acid polypeptide reads, in one-letter code: DnaJ homolog subfamily C member 5G (189 aa).

The J domain occupies S17–G98. The interval P154–F189 is disordered. Positions K161–P171 are enriched in polar residues.

Post-translationally, palmitoylated. Testis specific.

The protein localises to the membrane. The polypeptide is DnaJ homolog subfamily C member 5G (DNAJC5G) (Homo sapiens (Human)).